The primary structure comprises 313 residues: Ribosomal RNA small subunit methyltransferase H (313 aa).

S-adenosyl-L-methionine is bound by residues 35–37, D55, F81, D103, and Q110; that span reads GGH.

It belongs to the methyltransferase superfamily. RsmH family.

Its subcellular location is the cytoplasm. The enzyme catalyses cytidine(1402) in 16S rRNA + S-adenosyl-L-methionine = N(4)-methylcytidine(1402) in 16S rRNA + S-adenosyl-L-homocysteine + H(+). Its function is as follows. Specifically methylates the N4 position of cytidine in position 1402 (C1402) of 16S rRNA. The sequence is that of Ribosomal RNA small subunit methyltransferase H from Azotobacter vinelandii (strain DJ / ATCC BAA-1303).